A 155-amino-acid chain; its full sequence is Small ribosomal subunit protein uS7c (155 aa).

It belongs to the universal ribosomal protein uS7 family. In terms of assembly, part of the 30S ribosomal subunit.

The protein localises to the plastid. It is found in the chloroplast. One of the primary rRNA binding proteins, it binds directly to 16S rRNA where it nucleates assembly of the head domain of the 30S subunit. This is Small ribosomal subunit protein uS7c (rps7) from Allium textile (Textile onion).